Consider the following 117-residue polypeptide: Hydrogenase maturation factor HypA (117 aa).

His-2 is a binding site for Ni(2+). Cys-73, Cys-76, Cys-89, and Cys-92 together coordinate Zn(2+).

This sequence belongs to the HypA/HybF family.

Its function is as follows. Involved in the maturation of [NiFe] hydrogenases. Required for nickel insertion into the metal center of the hydrogenase. The sequence is that of Hydrogenase maturation factor HypA from Shewanella baltica (strain OS195).